The sequence spans 503 residues: ATP synthase subunit alpha (503 aa).

169–176 (GDRKTGKT) serves as a coordination point for ATP.

Belongs to the ATPase alpha/beta chains family. In terms of assembly, F-type ATPases have 2 components, CF(1) - the catalytic core - and CF(0) - the membrane proton channel. CF(1) has five subunits: alpha(3), beta(3), gamma(1), delta(1), epsilon(1). CF(0) has three main subunits: a(1), b(2) and c(9-12). The alpha and beta chains form an alternating ring which encloses part of the gamma chain. CF(1) is attached to CF(0) by a central stalk formed by the gamma and epsilon chains, while a peripheral stalk is formed by the delta and b chains.

The protein resides in the cell membrane. It catalyses the reaction ATP + H2O + 4 H(+)(in) = ADP + phosphate + 5 H(+)(out). Its function is as follows. Produces ATP from ADP in the presence of a proton gradient across the membrane. The alpha chain is a regulatory subunit. The sequence is that of ATP synthase subunit alpha from Ligilactobacillus salivarius (strain UCC118) (Lactobacillus salivarius).